The sequence spans 355 residues: UDP-N-acetylglucosamine--N-acetylmuramyl-(pentapeptide) pyrophosphoryl-undecaprenol N-acetylglucosamine transferase (355 aa).

UDP-N-acetyl-alpha-D-glucosamine is bound by residues 15 to 17, Asn127, Arg163, Ser191, Ile244, 263 to 268, and Gln288; these read TGG and ALTVSE.

It belongs to the glycosyltransferase 28 family. MurG subfamily.

The protein localises to the cell inner membrane. The enzyme catalyses di-trans,octa-cis-undecaprenyl diphospho-N-acetyl-alpha-D-muramoyl-L-alanyl-D-glutamyl-meso-2,6-diaminopimeloyl-D-alanyl-D-alanine + UDP-N-acetyl-alpha-D-glucosamine = di-trans,octa-cis-undecaprenyl diphospho-[N-acetyl-alpha-D-glucosaminyl-(1-&gt;4)]-N-acetyl-alpha-D-muramoyl-L-alanyl-D-glutamyl-meso-2,6-diaminopimeloyl-D-alanyl-D-alanine + UDP + H(+). Its pathway is cell wall biogenesis; peptidoglycan biosynthesis. Functionally, cell wall formation. Catalyzes the transfer of a GlcNAc subunit on undecaprenyl-pyrophosphoryl-MurNAc-pentapeptide (lipid intermediate I) to form undecaprenyl-pyrophosphoryl-MurNAc-(pentapeptide)GlcNAc (lipid intermediate II). The protein is UDP-N-acetylglucosamine--N-acetylmuramyl-(pentapeptide) pyrophosphoryl-undecaprenol N-acetylglucosamine transferase of Escherichia coli O9:H4 (strain HS).